The chain runs to 156 residues: Ribosome maturation factor RimP (156 aa).

The protein belongs to the RimP family.

It localises to the cytoplasm. Its function is as follows. Required for maturation of 30S ribosomal subunits. The sequence is that of Ribosome maturation factor RimP from Bacillus cereus (strain G9842).